A 1156-amino-acid polypeptide reads, in one-letter code: Nitric oxide synthase, inducible (1156 aa).

A DINNN-motif; mediates interaction with SPSB1, SPSB2 and SPSB4 motif is present at residues 23 to 27 (DINNN). Residues 27–84 (NVGKFYQPPSSPVTQDDPKRHSPGKHGNESPQPLTGTVKTSPESLSKLDAPPSACPRH) form a disordered region. The segment covering 55 to 70 (ESPQPLTGTVKTSPES) has biased composition (polar residues). Cysteine 110 and cysteine 115 together coordinate Zn(2+). (6R)-L-erythro-5,6,7,8-tetrahydrobiopterin is bound at residue serine 118. A heme b-binding site is contributed by cysteine 200. Residues glutamine 263, tryptophan 372, tyrosine 373, and glutamate 377 each contribute to the L-arginine site. 4 residues coordinate (6R)-L-erythro-5,6,7,8-tetrahydrobiopterin: arginine 381, isoleucine 462, tryptophan 463, and phenylalanine 476. Tyrosine 491 serves as a coordination point for heme b. Residues 515–535 (FKVLVKAVFFASVLMHKAMAS) are calmodulin-binding. Positions 539 to 677 (ATILFATETG…AFRSWAVQTF (139 aa)) constitute a Flavodoxin-like domain. FMN is bound by residues threonine 545, glutamate 546, threonine 547, arginine 549, and serine 550. Residue tyrosine 575 is modified to Phosphotyrosine. Positions 591, 592, 628, 635, 661, and 665 each coordinate FMN. The FAD-binding FR-type domain maps to 730 to 970 (KHVFTMRLKS…VRSASGFQLP (241 aa)). Arginine 750 is an NADP(+) binding site. Positions 772, 906, 908, 909, 924, and 926 each coordinate FAD. Threonine 929 contacts NADP(+). Positions 930, 943, 944, and 945 each coordinate FAD. Residues threonine 984, arginine 1017, serine 1046, arginine 1047, lysine 1053, tyrosine 1055, glutamine 1057, and aspartate 1090 each contribute to the NADP(+) site.

The protein belongs to the NOS family. In terms of assembly, homodimer. Interacts with NHERF1. Interacts with GAPDH; induced by oxidatively-modified low-densitity lipoprotein (LDL(ox)). Interacts with S100A8 and S100A9 to form the iNOS-S100A8/9 transnitrosylase complex. Interacts with SPSB1, SPSB2 and SPSB4. Interacts with ELOC and CUL5 in the presence of SPSB1 or SPSB2 or SPSB4. Forms a complex with ASL, ASS1 and HSP90AA1; the complex regulates cell-autonomous L-arginine synthesis and citrulline recycling while channeling extracellular L-arginine to nitric oxide synthesis pathway. Heme b serves as cofactor. The cofactor is FAD. FMN is required as a cofactor. Requires (6R)-L-erythro-5,6,7,8-tetrahydrobiopterin as cofactor. Post-translationally, polyubiquitinated; mediated by SPSB1, SPSB2 and SPSB4, leading to proteasomal degradation.

The protein localises to the cytoplasm. It localises to the cytosol. It carries out the reaction 2 L-arginine + 3 NADPH + 4 O2 + H(+) = 2 L-citrulline + 2 nitric oxide + 3 NADP(+) + 4 H2O. With respect to regulation, regulated by calcium/calmodulin. Its function is as follows. Produces nitric oxide (NO) which is a messenger molecule with diverse functions throughout the body. In macrophages, NO mediates tumoricidal and bactericidal actions. Also has nitrosylase activity and mediates cysteine S-nitrosylation of cytoplasmic target proteins such PTGS2/COX2. As component of the iNOS-S100A8/9 transnitrosylase complex involved in the selective inflammatory stimulus-dependent S-nitrosylation of GAPDH implicated in regulation of the GAIT complex activity and probably multiple targets including ANXA5, EZR, MSN and VIM. Involved in inflammation, enhances the synthesis of pro-inflammatory mediators such as IL6 and IL8. The polypeptide is Nitric oxide synthase, inducible (NOS2) (Bos taurus (Bovine)).